The following is a 99-amino-acid chain: Bublin coiled-coil protein (99 aa).

The stretch at 34 to 71 forms a coiled coil; sequence LDQINSCLDDIEERNDALNGKLQELLESNRAARRDFRQ. Residues 66-78 show a composition bias toward basic and acidic residues; it reads RRDFRQQITDHAD. A disordered region spans residues 66 to 99; sequence RRDFRQQITDHADLPPPANDDDEDEQSRDAQKKD.

This sequence belongs to the UPF0184 (EST00098) family.

It is found in the cell junction. Its subcellular location is the cytoplasm. The protein localises to the cytoskeleton. Essential for intermediate filament organization in intestinal cells, interacts with intermediate filament and regulates intestinal lumen morphology. The protein is Bublin coiled-coil protein (bbln) of Danio rerio (Zebrafish).